The primary structure comprises 227 residues: Transmembrane emp24 domain-containing protein 1 (227 aa).

The signal sequence occupies residues 1–23; it reads MMAAGAALALALWLLMPPVEVGG. The Extracellular segment spans residues 24–194; the sequence is AGPPPIQDGE…LQEGNLERVN (171 aa). The region spanning 43–125 is the GOLD domain; the sequence is KQCFYQSAPA…EKLVFFELIF (83 aa). Residues 145–170 are a coiled coil; the sequence is EMLDVKMEDIKESIETMRTRLERSIQ. Residues 195 to 215 traverse the membrane as a helical segment; the sequence is FWSAVNVAVLLLVAVLQVCTL. Topologically, residues 216–227 are cytoplasmic; sequence KRFFQDKRPVPT. Positions 218–219 match the COPII vesicle coat-binding motif; that stretch reads FF. The COPI vesicle coat-binding signature appears at 218–227; the sequence is FFQDKRPVPT.

This sequence belongs to the EMP24/GP25L family. In terms of assembly, homodimer in endoplasmic reticulum, endoplasmic reticulum-Golgi intermediate compartment and cis-Golgi network. Interacts with IL1RL1. Interacts with RNF26; this interaction is important to modulate innate immune signaling through the cGAS-STING pathway. In terms of tissue distribution, widely expressed.

The protein resides in the cell membrane. Its subcellular location is the endoplasmic reticulum membrane. The protein localises to the golgi apparatus. It localises to the cis-Golgi network membrane. It is found in the endoplasmic reticulum-Golgi intermediate compartment membrane. In terms of biological role, potential role in vesicular protein trafficking, mainly in the early secretory pathway. May act as a cargo receptor at the lumenal side for incorporation of secretory cargo molecules into transport vesicles and may be involved in vesicle coat formation at the cytoplasmic side. Plays a positive role in IL-33-mediated IL-8 and IL-6 production by interacting with interleukin-33 receptor IL1RL1. Also plays a role in the modulation of innate immune signaling through the cGAS-STING pathway by interacting with RNF26. This chain is Transmembrane emp24 domain-containing protein 1 (TMED1), found in Homo sapiens (Human).